The primary structure comprises 366 residues: 8-hydroxyquercetin 8-O-methyltransferase (366 aa).

Residues 207-210, 231-232, 251-252, and Lys265 each bind S-adenosyl-L-methionine; these read VGGG, DL, and DM. His269 serves as the catalytic Proton acceptor.

The protein belongs to the class I-like SAM-binding methyltransferase superfamily. Cation-independent O-methyltransferase family. COMT subfamily. As to quaternary structure, homodimer.

The enzyme catalyses 3,3',4',5,7,8-hexahydroxyflavone + S-adenosyl-L-methionine = 3,3',4',5,7-pentahydroxy-8-methoxyflavone + S-adenosyl-L-homocysteine + H(+). The catalysed reaction is 4',7,8-trihydroxyflavone + S-adenosyl-L-methionine = 4',7-dihydroxy-8-methoxyflavone + S-adenosyl-L-homocysteine + H(+). It carries out the reaction 8-hydroxy-7-methoxyflavone + S-adenosyl-L-methionine = 7,8-dimethoxyflavone + S-adenosyl-L-homocysteine + H(+). It functions in the pathway flavonoid metabolism. Functionally, flavonoid 8-O-methyltransferase involved in the biosynthesis of polymethoxylated flavonoids natural products such as pebrellin, aroma compounds which contribute to the flavor of peppermint, and exhibit pharmacological activities such as anti-allergic, anti-oxidant, antibacterial, anti-proliferative, and anti-inflammatory effects. Catalyzes S-adenosylmethionine-dependent regioselective 8-O-methylation of flavonoids; active on various hydroxylated flavonoid substrates, including 7,8,3'4'-tetrahydroxy-flavone, 7,8,4'-trihydroxy-flavone and 8-hydroxy-flavone 7-methyl ether. The polypeptide is 8-hydroxyquercetin 8-O-methyltransferase (Mentha piperita (Peppermint)).